A 257-amino-acid polypeptide reads, in one-letter code: MLNLYGRKFSSRLMLGTAQYPSPAILRNAIHKSNIEIVTVSLRRETAGGKQGGQFWQFLKELDITVLPNTAGCYTVKEAVTTAQLARDLFKTSWIKLEIIGNPDTLQPNVFSLIEAAQILNSDGFQIFAYTTDDLIVAERLLDVGCRVIMPWCAPIGSGQGPHNTDGLRSIRAYLPDVTLVIDAGIGRPSHAAVAMELGYDAVLLNTAVAKAGDPVLMAQAFAQAVQAGRMGYKAGILKARNIAVPSTPIVGKAVFS.

Lys-96 acts as the Schiff-base intermediate with DXP in catalysis. 1-deoxy-D-xylulose 5-phosphate contacts are provided by residues Gly-157, 184–185, and 206–207; these read AG and NT.

Belongs to the ThiG family. In terms of assembly, homotetramer. Forms heterodimers with either ThiH or ThiS.

It is found in the cytoplasm. The catalysed reaction is [ThiS sulfur-carrier protein]-C-terminal-Gly-aminoethanethioate + 2-iminoacetate + 1-deoxy-D-xylulose 5-phosphate = [ThiS sulfur-carrier protein]-C-terminal Gly-Gly + 2-[(2R,5Z)-2-carboxy-4-methylthiazol-5(2H)-ylidene]ethyl phosphate + 2 H2O + H(+). It participates in cofactor biosynthesis; thiamine diphosphate biosynthesis. Functionally, catalyzes the rearrangement of 1-deoxy-D-xylulose 5-phosphate (DXP) to produce the thiazole phosphate moiety of thiamine. Sulfur is provided by the thiocarboxylate moiety of the carrier protein ThiS. In vitro, sulfur can be provided by H(2)S. The protein is Thiazole synthase of Bartonella quintana (strain Toulouse) (Rochalimaea quintana).